The primary structure comprises 297 residues: Octopine catabolism/uptake operon regulatory protein OccR (297 aa).

The HTH lysR-type domain occupies 1–58 (MNLRQVEAFRAVMLTGQMTAAAELMLVTQPAISRLIKDFERATKLQLFERRGNHIIPT). A DNA-binding region (H-T-H motif) is located at residues 18–37 (MTAAAELMLVTQPAISRLIK).

The protein belongs to the LysR transcriptional regulatory family.

In terms of biological role, positive regulatory protein for the occ operon involved in octopine catabolism and uptake. Also acts as a negative regulator of its expression. The polypeptide is Octopine catabolism/uptake operon regulatory protein OccR (occR) (Rhizobium meliloti (Ensifer meliloti)).